The chain runs to 89 residues: Small ribosomal subunit protein uS15 (89 aa).

It belongs to the universal ribosomal protein uS15 family. As to quaternary structure, part of the 30S ribosomal subunit. Forms a bridge to the 50S subunit in the 70S ribosome, contacting the 23S rRNA.

Functionally, one of the primary rRNA binding proteins, it binds directly to 16S rRNA where it helps nucleate assembly of the platform of the 30S subunit by binding and bridging several RNA helices of the 16S rRNA. Its function is as follows. Forms an intersubunit bridge (bridge B4) with the 23S rRNA of the 50S subunit in the ribosome. This Streptococcus mutans serotype c (strain ATCC 700610 / UA159) protein is Small ribosomal subunit protein uS15.